The chain runs to 317 residues: tRNA(Met) cytidine acetate ligase (317 aa).

ATP contacts are provided by residues 6-19 (IAEY…HIYQ), G100, N157, and R182.

This sequence belongs to the TmcAL family.

The protein resides in the cytoplasm. It carries out the reaction cytidine(34) in elongator tRNA(Met) + acetate + ATP = N(4)-acetylcytidine(34) in elongator tRNA(Met) + AMP + diphosphate. Catalyzes the formation of N(4)-acetylcytidine (ac(4)C) at the wobble position of elongator tRNA(Met), using acetate and ATP as substrates. First activates an acetate ion to form acetyladenylate (Ac-AMP) and then transfers the acetyl group to tRNA to form ac(4)C34. The protein is tRNA(Met) cytidine acetate ligase of Mesomycoplasma hyopneumoniae (strain J / ATCC 25934 / NCTC 10110) (Mycoplasma hyopneumoniae).